Here is a 264-residue protein sequence, read N- to C-terminus: Thiazole synthase (264 aa).

Lys-98 serves as the catalytic Schiff-base intermediate with DXP. 1-deoxy-D-xylulose 5-phosphate-binding positions include Gly-159, 185-186, and 207-208; these read AG and AS.

The protein belongs to the ThiG family. As to quaternary structure, homotetramer. Forms heterodimers with either ThiH or ThiS.

It localises to the cytoplasm. The enzyme catalyses [ThiS sulfur-carrier protein]-C-terminal-Gly-aminoethanethioate + 2-iminoacetate + 1-deoxy-D-xylulose 5-phosphate = [ThiS sulfur-carrier protein]-C-terminal Gly-Gly + 2-[(2R,5Z)-2-carboxy-4-methylthiazol-5(2H)-ylidene]ethyl phosphate + 2 H2O + H(+). Its pathway is cofactor biosynthesis; thiamine diphosphate biosynthesis. Functionally, catalyzes the rearrangement of 1-deoxy-D-xylulose 5-phosphate (DXP) to produce the thiazole phosphate moiety of thiamine. Sulfur is provided by the thiocarboxylate moiety of the carrier protein ThiS. In vitro, sulfur can be provided by H(2)S. In Streptomyces griseus subsp. griseus (strain JCM 4626 / CBS 651.72 / NBRC 13350 / KCC S-0626 / ISP 5235), this protein is Thiazole synthase.